The following is a 289-amino-acid chain: Enoyl-CoA hydratase domain-containing protein 3, mitochondrial (289 aa).

The transit peptide at Met1–Gly14 directs the protein to the mitochondrion.

This sequence belongs to the enoyl-CoA hydratase/isomerase family.

It is found in the mitochondrion. In terms of biological role, may play a role in fatty acid biosynthesis and insulin sensitivity. In Danio rerio (Zebrafish), this protein is Enoyl-CoA hydratase domain-containing protein 3, mitochondrial (echdc3).